Here is a 972-residue protein sequence, read N- to C-terminus: MNVMVSFNQLRNYFLESNSLRPSKWLFQSYGTSSSANILNGKLLARKLQRSVAEEVQALKAKDRNFKPALAIVQVGKREDSNVYVRMKEKAARLVGIDFKYCPFPETIQMPALLHELKKLNDDHTVHGVLVQLPLPKHLNERTVTESITPPKDVDGFGAFNIGLLAKNDATPIHYPCTPKGIMELLKDNKISVAGLNAVVLGRSDIVGNPISYLLRKDNATVTVCHSKTKDLIQHISNADLVIAALGKPEFVRGEWLKPGSVVVDVGINAVQRNGKRVLVGDVHFESASKVASSITPVPGGVGPMTVAMLMENIVNAAKIARTENIYRKIDLNPLELKKPVPSDIEIANSQEPKLISNLAKEMGIYDTELENYGNYKAKVNLAVYERLKHRKDGNYVVVSGITPTPFGEGKSTVVAGLVQAMGHLGKLGIACVRQPSQGPTFGVKGGAAGGGYAQFIPMDDFNLHMTGDIHAVTAANNLLVAALETRMFHENTQSDAALIKRLIPVKNGRRVIPRGLIGRWNRICASHNMDPEDVNNASPELLKEFVRLNVDPDTIECNRVLDVNDRFLRSIEVGKASTEKGHVRKTSFDISVASECMSILALSCDLNDMHSRLSRMVIANDKYGNAITAGDLGVSGALTVLLKDAIKPNLMQTLEGTPAFVHAGPFANISIGASSIIADKIALKLAGTESFDRPEDAGYVVTEAGFASDMGMEKFFNIKCRYSKLVPNTVVLVTTVKALKLHGGGPKLKPGAPIPEEYLVENLDLVKNGCSNMVKHIQNCHKFNIPVVVAINSYKTDSSKEHEIIREAALQAGAVDAVPSDHWAQGGKGAIELAKSVMTACDQSSNSKFRLLYDSETSIEDKVNVIAKEMYGANGVEFSSLAKERINTFIKQGFGNLPICMAKTQYSLSHNPEFRNVPKNFTVPIRDMRLNAGAGFIYPLAAEIQTIPGLPTAPAYLNIDICENGEIVGLS.

The N-terminal 55 residues, 1–55 (MNVMVSFNQLRNYFLESNSLRPSKWLFQSYGTSSSANILNGKLLARKLQRSVAEE), are a transit peptide targeting the mitochondrion. A methylenetetrahydrofolate dehydrogenase and cyclohydrolase region spans residues 56–340 (VQALKAKDRN…DLNPLELKKP (285 aa)). Substrate-binding positions include 84–88 (YVRMK) and 131–133 (VQL). NADP(+)-binding positions include 202-204 (GRS) and Ser-227. Residue 299-303 (PGGVG) participates in substrate binding. The interval 341–972 (VPSDIEIANS…CENGEIVGLS (632 aa)) is formyltetrahydrofolate synthetase. Residue 405–412 (TPFGEGKS) participates in ATP binding.

It in the N-terminal section; belongs to the tetrahydrofolate dehydrogenase/cyclohydrolase family. The protein in the C-terminal section; belongs to the formate--tetrahydrofolate ligase family. In terms of assembly, homodimer.

Its subcellular location is the mitochondrion. The catalysed reaction is (6R)-5,10-methylene-5,6,7,8-tetrahydrofolate + NADP(+) = (6R)-5,10-methenyltetrahydrofolate + NADPH. It catalyses the reaction (6R)-5,10-methenyltetrahydrofolate + H2O = (6R)-10-formyltetrahydrofolate + H(+). It carries out the reaction (6S)-5,6,7,8-tetrahydrofolate + formate + ATP = (6R)-10-formyltetrahydrofolate + ADP + phosphate. It participates in one-carbon metabolism; tetrahydrofolate interconversion. In terms of biological role, mitochondrial isozyme of C-1-tetrahydrofolate synthase. The trifunctional enzyme catalyzes the interconversion of the one-carbon derivatives of tetrahydrofolate (THF) between different oxidation states by the enzymatic activities 10-formyltetrahydrofolate synthetase, 5,lO-methenyltetrahydrofolate cyclohydrolase, and 5,lO-methylenetetrahydrofolate dehydrogenase. This Schizosaccharomyces pombe (strain 972 / ATCC 24843) (Fission yeast) protein is C-1-tetrahydrofolate synthase, mitochondrial (ade9).